Here is a 437-residue protein sequence, read N- to C-terminus: Chromosomal replication initiator protein DnaA (437 aa).

The interval 1 to 67 (MKNKIIASLK…KVVKDILGKD (67 aa)) is domain I, interacts with DnaA modulators. The tract at residues 67–97 (DATYEITFKEIPYETKVESGPLIKKRPLLIT) is domain II. Positions 98–313 (PLNPKYTFEN…GAILRLIAYR (216 aa)) are domain III, AAA+ region. Residues G141, G143, K144, and T145 each contribute to the ATP site. A domain IV, binds dsDNA region spans residues 314-437 (NLYGTLNLSI…SKGFAQGESM (124 aa)).

This sequence belongs to the DnaA family. Oligomerizes as a right-handed, spiral filament on DNA at oriC.

Its subcellular location is the cytoplasm. Its function is as follows. Plays an essential role in the initiation and regulation of chromosomal replication. ATP-DnaA binds to the origin of replication (oriC) to initiate formation of the DNA replication initiation complex once per cell cycle. Binds the DnaA box (a 9 base pair repeat at the origin) and separates the double-stranded (ds)DNA. Forms a right-handed helical filament on oriC DNA; dsDNA binds to the exterior of the filament while single-stranded (ss)DNA is stabiized in the filament's interior. The ATP-DnaA-oriC complex binds and stabilizes one strand of the AT-rich DNA unwinding element (DUE), permitting loading of DNA polymerase. After initiation quickly degrades to an ADP-DnaA complex that is not apt for DNA replication. Binds acidic phospholipids. This is Chromosomal replication initiator protein DnaA from Thermosipho melanesiensis (strain DSM 12029 / CIP 104789 / BI429).